The sequence spans 483 residues: Probable cytosol aminopeptidase (483 aa).

2 residues coordinate Mn(2+): Lys244 and Asp249. The active site involves Lys256. Positions 267, 326, and 328 each coordinate Mn(2+). The active site involves Arg330.

Belongs to the peptidase M17 family. It depends on Mn(2+) as a cofactor.

It is found in the cytoplasm. The enzyme catalyses Release of an N-terminal amino acid, Xaa-|-Yaa-, in which Xaa is preferably Leu, but may be other amino acids including Pro although not Arg or Lys, and Yaa may be Pro. Amino acid amides and methyl esters are also readily hydrolyzed, but rates on arylamides are exceedingly low.. The catalysed reaction is Release of an N-terminal amino acid, preferentially leucine, but not glutamic or aspartic acids.. Its function is as follows. Presumably involved in the processing and regular turnover of intracellular proteins. Catalyzes the removal of unsubstituted N-terminal amino acids from various peptides. This is Probable cytosol aminopeptidase from Campylobacter jejuni subsp. jejuni serotype O:2 (strain ATCC 700819 / NCTC 11168).